Reading from the N-terminus, the 111-residue chain is Cytochrome c6-like (111 aa).

Positions 1 to 25 (MQKFLKLVLVTFLFLISTLTPPANA) are cleaved as a signal peptide. C39, C42, H43, and M83 together coordinate heme c.

Belongs to the cytochrome c family. PetJ subfamily. Post-translationally, binds 1 heme c group covalently per subunit.

It is found in the cellular thylakoid lumen. The protein is Cytochrome c6-like of Nostoc sp. (strain PCC 7120 / SAG 25.82 / UTEX 2576).